The following is a 136-amino-acid chain: Large ribosomal subunit protein uL16 (136 aa).

The protein belongs to the universal ribosomal protein uL16 family. As to quaternary structure, part of the 50S ribosomal subunit.

Binds 23S rRNA and is also seen to make contacts with the A and possibly P site tRNAs. This Salmonella agona (strain SL483) protein is Large ribosomal subunit protein uL16.